A 167-amino-acid chain; its full sequence is S-ribosylhomocysteine lyase (167 aa).

Fe cation contacts are provided by H54, H58, and C128.

It belongs to the LuxS family. Homodimer. Requires Fe cation as cofactor.

The catalysed reaction is S-(5-deoxy-D-ribos-5-yl)-L-homocysteine = (S)-4,5-dihydroxypentane-2,3-dione + L-homocysteine. Functionally, involved in the synthesis of autoinducer 2 (AI-2) which is secreted by bacteria and is used to communicate both the cell density and the metabolic potential of the environment. The regulation of gene expression in response to changes in cell density is called quorum sensing. Catalyzes the transformation of S-ribosylhomocysteine (RHC) to homocysteine (HC) and 4,5-dihydroxy-2,3-pentadione (DPD). This Haemophilus influenzae (strain PittEE) protein is S-ribosylhomocysteine lyase.